The chain runs to 570 residues: Formate--tetrahydrofolate ligase (570 aa).

65–72 (TPHGEGKT) contacts ATP.

Belongs to the formate--tetrahydrofolate ligase family.

It carries out the reaction (6S)-5,6,7,8-tetrahydrofolate + formate + ATP = (6R)-10-formyltetrahydrofolate + ADP + phosphate. Its pathway is one-carbon metabolism; tetrahydrofolate interconversion. This Shewanella oneidensis (strain ATCC 700550 / JCM 31522 / CIP 106686 / LMG 19005 / NCIMB 14063 / MR-1) protein is Formate--tetrahydrofolate ligase.